The chain runs to 1413 residues: MKDLLKFLKAQTKNEDFDAIKISLASPDMIRSWSFGEVKKPETINYRTFKPERDGLFCARIFGPVKDYECLCGKYKRLKHRGVICEKCGVEVTQSKVRRERMGHIELSSPTAHIWFLKSLPSRIGLLLDMPLRDIERVLYFESYVVIETGMTNLEKRQILTEEQYLDALEEFGDEFYATMGAEAIQSLLKDINLVKECENLRIELNETNSETKRKKLTKRIKLLESFIQSNNKPEWMILTVLPVLPPDLRPLVPLDGGRFATSDLNDLYRRVINRNNRLKRLLDLAAPDIIVRNEKRMLQEAIDALLDNGRRGRAITGSNKRPLKSLADMIKGKQGRFRQNLLGKRVDYSGRSVITVGPYLRLHQCGLPKKMALELFKPFIYGKLEVRGLATTIKAAKKMVEREEAIVWDILDEVIREHPVLLNRAPTLHRLGIQAFEPVLIEGKAIQLHPLVCAAYNADFDGDQMAVHVPLTLEAQLEARALMMSTNNILSPANGEPIIVPSQDVVLGLYYMTREKINGKGEGMILNGSNEAEKVYRLEIAELHSLVKVRITEYKKNKDQSFIPKTKIINTTIGRAILWMIVPKGLPFSIVNQTLGKKDISKMLNTCYRILGLKPTVAFADQIMYTGFAYAARSGASVGIDDMVIPVKKLNIIHEAEIEVAEIQEQFQSGLVTAGERYNKVIDIWAAANERVAKAMMENLSTESVFNKKGEKQKQISFNSIFMMADSGARGSAAQIRQLAGMRGLMAKPDGSIIETPITANFREGLNVLQYFISTHGARKGLADTALKTANSGYLTRRLVDVAQDLVVTQNDCGTHEGILMTPLIEGGDVKEPLRERVLGRVTAEKILIPNTENILIERNTLLNEQWCDLLEKNSIDNVKVRSVVNCETDFGVCAYCYGRDLARGNLVNKGEAIGVIAAQSIGEPGTQLTMRTFHIGGAASRAATESSIQIKNKGIINLNNAKSVTNSSGKIVITSRNVELNIIDNFRRTKETYKVPYGAIMAKGHGEQVNSGETVAKWDPHTIPVITEVSGFVRFVDMIDGQSITRQADELTGLSSIVVLDTAERMTIGKDLRPSLKIVDRDGNDVLISGTEMPAQYFLPGKAIVQLDDRVQISSGDTLARVPQESGGTKDITGGLPRVADLFEARRPKELAILAEISGIISFGKETKGKRRLIITPVDGSDAYEEMIPKWRQLNVFEGERVERGDVISDGPESPHDILRLRGVQAVTKYIVNEVQEVYRLQGVKINDKHIEVIIRQMLRKATVIKSGNSEFLDGEQVEFSRIKISNRILNKQSKIPATFSRDLLGITKASLATESFISAASFQETTRVLTESAVAGKKDELRGLKENVIVGRLIPAGTGYAYHKERLNRRHTVNTNQIKPNNSSSQISAEEASASLSELLNSTLIQHDHT.

Residues Cys70, Cys72, Cys85, and Cys88 each coordinate Zn(2+). Mg(2+) is bound by residues Asp460, Asp462, and Asp464. Zn(2+) is bound by residues Cys814, Cys888, Cys895, and Cys898.

The protein belongs to the RNA polymerase beta' chain family. In terms of assembly, the RNAP catalytic core consists of 2 alpha, 1 beta, 1 beta' and 1 omega subunit. When a sigma factor is associated with the core the holoenzyme is formed, which can initiate transcription. Mg(2+) serves as cofactor. Zn(2+) is required as a cofactor.

The catalysed reaction is RNA(n) + a ribonucleoside 5'-triphosphate = RNA(n+1) + diphosphate. Functionally, DNA-dependent RNA polymerase catalyzes the transcription of DNA into RNA using the four ribonucleoside triphosphates as substrates. This is DNA-directed RNA polymerase subunit beta' from Buchnera aphidicola subsp. Schizaphis graminum (strain Sg).